A 110-amino-acid chain; its full sequence is Phosphoribosyl-ATP pyrophosphatase (110 aa).

It belongs to the PRA-PH family.

Its subcellular location is the cytoplasm. The catalysed reaction is 1-(5-phospho-beta-D-ribosyl)-ATP + H2O = 1-(5-phospho-beta-D-ribosyl)-5'-AMP + diphosphate + H(+). The protein operates within amino-acid biosynthesis; L-histidine biosynthesis; L-histidine from 5-phospho-alpha-D-ribose 1-diphosphate: step 2/9. The sequence is that of Phosphoribosyl-ATP pyrophosphatase from Pseudomonas fluorescens (strain Pf0-1).